A 157-amino-acid polypeptide reads, in one-letter code: Small ribosomal subunit protein uS7 (157 aa).

Belongs to the universal ribosomal protein uS7 family. In terms of assembly, part of the 30S ribosomal subunit. Contacts proteins S9 and S11.

Functionally, one of the primary rRNA binding proteins, it binds directly to 16S rRNA where it nucleates assembly of the head domain of the 30S subunit. Is located at the subunit interface close to the decoding center, probably blocks exit of the E-site tRNA. The chain is Small ribosomal subunit protein uS7 from Francisella tularensis subsp. tularensis (strain FSC 198).